Reading from the N-terminus, the 311-residue chain is Cytochrome f (311 aa).

The N-terminal stretch at 1-27 (MRRHLSLVLGSLVIGLALLIAPGASWA) is a signal peptide. Tyrosine 28, cysteine 48, cysteine 51, and histidine 52 together coordinate heme. Residues 277–297 (IYGLLAFFAAVAIAQIMLVLK) traverse the membrane as a helical segment.

This sequence belongs to the cytochrome f family. In terms of assembly, the 4 large subunits of the cytochrome b6-f complex are cytochrome b6, subunit IV (17 kDa polypeptide, PetD), cytochrome f and the Rieske protein, while the 4 small subunits are PetG, PetL, PetM and PetN. The complex functions as a dimer. Heme serves as cofactor.

The protein resides in the cellular thylakoid membrane. In terms of biological role, component of the cytochrome b6-f complex, which mediates electron transfer between photosystem II (PSII) and photosystem I (PSI), cyclic electron flow around PSI, and state transitions. The protein is Cytochrome f of Synechococcus sp. (strain CC9902).